We begin with the raw amino-acid sequence, 405 residues long: Acetate kinase (405 aa).

N7 is a Mg(2+) binding site. K14 is a binding site for ATP. R92 contributes to the substrate binding site. The active-site Proton donor/acceptor is the D149. ATP-binding positions include 209-213 and 284-286; these read HLGNG and DMR. Residue E389 coordinates Mg(2+).

Belongs to the acetokinase family. Homodimer. Mg(2+) serves as cofactor. Requires Mn(2+) as cofactor.

Its subcellular location is the cytoplasm. It carries out the reaction acetate + ATP = acetyl phosphate + ADP. Its pathway is metabolic intermediate biosynthesis; acetyl-CoA biosynthesis; acetyl-CoA from acetate: step 1/2. Its function is as follows. Catalyzes the formation of acetyl phosphate from acetate and ATP. Can also catalyze the reverse reaction. The chain is Acetate kinase from Borrelia garinii subsp. bavariensis (strain ATCC BAA-2496 / DSM 23469 / PBi) (Borreliella bavariensis).